Reading from the N-terminus, the 408-residue chain is GTPase Obg (408 aa).

In terms of domain architecture, Obg spans 1–159 (MKFVDEVSIR…RDLKMEMKVL (159 aa)). A disordered region spans residues 127–148 (NTRFKSSTNRAPRQTTPGKPGE). Polar residues predominate over residues 129–143 (RFKSSTNRAPRQTTP). An OBG-type G domain is found at 160-333 (ADVGLLGLPN…LSHDLMRYLE (174 aa)). GTP is bound by residues 166–173 (GLPNAGKS), 191–195 (FTTLV), 213–216 (DIPG), 283–286 (NKAD), and 314–316 (SAI). Mg(2+) contacts are provided by Ser173 and Thr193. Acidic residues predominate over residues 385–401 (GDDDGWDDDFEDDEDGP). Residues 385–408 (GDDDGWDDDFEDDEDGPEIIYVRD) form a disordered region.

This sequence belongs to the TRAFAC class OBG-HflX-like GTPase superfamily. OBG GTPase family. Monomer. It depends on Mg(2+) as a cofactor.

It is found in the cytoplasm. In terms of biological role, an essential GTPase which binds GTP, GDP and possibly (p)ppGpp with moderate affinity, with high nucleotide exchange rates and a fairly low GTP hydrolysis rate. Plays a role in control of the cell cycle, stress response, ribosome biogenesis and in those bacteria that undergo differentiation, in morphogenesis control. The sequence is that of GTPase Obg from Pseudomonas putida (strain ATCC 700007 / DSM 6899 / JCM 31910 / BCRC 17059 / LMG 24140 / F1).